Reading from the N-terminus, the 272-residue chain is Ribosomal RNA large subunit methyltransferase E (272 aa).

S-adenosyl-L-methionine-binding residues include G50, W52, D68, D84, and D109. Residue K149 is the Proton acceptor of the active site. One can recognise a TRAM domain in the interval 196–254; the sequence is PLRRGDKFVVDIEKLGSGGDGAVLIEGFVVFVKEVEVGEKVRIKIADVKPNFAFADVEE.

Belongs to the class I-like SAM-binding methyltransferase superfamily. RNA methyltransferase RlmE family.

It is found in the cytoplasm. It carries out the reaction uridine(2552) in 23S rRNA + S-adenosyl-L-methionine = 2'-O-methyluridine(2552) in 23S rRNA + S-adenosyl-L-homocysteine + H(+). Specifically methylates the uridine in position 2552 of 23S rRNA at the 2'-O position of the ribose in the fully assembled 50S ribosomal subunit. In Methanosarcina acetivorans (strain ATCC 35395 / DSM 2834 / JCM 12185 / C2A), this protein is Ribosomal RNA large subunit methyltransferase E.